A 235-amino-acid chain; its full sequence is Small ribosomal subunit protein uS10m (235 aa).

A mitochondrion-targeting transit peptide spans 1-19; sequence MLRTSVRSPLLYRCLSKRF.

The protein belongs to the universal ribosomal protein uS10 family. Part of the mitochondrial small ribosomal subunit.

The protein resides in the mitochondrion. Functionally, involved in mitochondrial genome encoded proteins translation. Involved in the binding of tRNA to the ribosomes. In Candida glabrata (strain ATCC 2001 / BCRC 20586 / JCM 3761 / NBRC 0622 / NRRL Y-65 / CBS 138) (Yeast), this protein is Small ribosomal subunit protein uS10m (RSM10).